The primary structure comprises 450 residues: MPRTEMVRFVRLPVVLLAMAACLASVALGSLHVEESLEMRFAAFKKKYGKVYKDAKEEAFRFRAFEENMEQAKIQAAANPYATFGVTPFSDMTREEFRARYRNGASYFAAAQKRLRKTVNVTTGRAPAAVDWREKGAVTPVKVQGQCGSCWAFSTIGNIEGQWQVAGNPLVSLSEQMLVSCDTIDSGCNGGLMDNAFNWIVNSNGGNVFTEASYPYVSGNGEQPQCQMNGHEIGAAITDHVDLPQDEDAIAAYLAENGPLAIAVDAESFMDYNGGILTSCTSKQLDHGVLLVGYNDNSNPPYWIIKNSWSNMWGEDGYIRIEKGTNQCLMNQAVSSAVVGGPTPPPPPPPPPSATFTQDFCEGKGCTKGCSHATFPTGECVQTTGVGSVIATCGASNLTQIIYPLSRSCSGPSVPITVPLDKCIPILIGSVEYHCSTNPPTKAARLVPHQ.

The first 20 residues, 1–20 (MPRTEMVRFVRLPVVLLAMA), serve as a signal peptide directing secretion. A propeptide spans 21 to 125 (ACLASVALGS…RKTVNVTTGR (105 aa)) (activation peptide). The N-linked (GlcNAc...) asparagine glycan is linked to Asn-120. Cysteines 147 and 188 form a disulfide. Active-site residues include Cys-150, His-287, and Asn-307. The interval 343–450 (TPPPPPPPPP…TKAARLVPHQ (108 aa)) is 108-residue extension. A glycan (N-linked (GlcNAc...) asparagine) is linked at Asn-397.

Belongs to the peptidase C1 family.

Its subcellular location is the lysosome. In terms of biological role, the cysteine proteinases have a potential role in host-parasite interaction and virulence. This Trypanosoma brucei brucei protein is Cysteine proteinase.